We begin with the raw amino-acid sequence, 444 residues long: Spermidine/putrescine import ATP-binding protein PotA (444 aa).

Positions 11–332 (ISLVDVDKEF…PVNKWVANFI (322 aa)) constitute an ABC transporter domain. Position 43-50 (43-50 (GPSGSGKT)) interacts with ATP. An insert region spans residues 111–201 (RIKKKAEEIP…ESFKKKYLTR (91 aa)).

This sequence belongs to the ABC transporter superfamily. Spermidine/putrescine importer (TC 3.A.1.11.1) family. As to quaternary structure, the complex is composed of two ATP-binding proteins (PotA), two transmembrane proteins (PotB and PotC) and a solute-binding protein (PotD).

It is found in the cell membrane. The catalysed reaction is ATP + H2O + polyamine-[polyamine-binding protein]Side 1 = ADP + phosphate + polyamineSide 2 + [polyamine-binding protein]Side 1.. In terms of biological role, part of the ABC transporter complex PotABCD involved in spermidine/putrescine import. Responsible for energy coupling to the transport system. This Mesomycoplasma hyopneumoniae (strain J / ATCC 25934 / NCTC 10110) (Mycoplasma hyopneumoniae) protein is Spermidine/putrescine import ATP-binding protein PotA.